Reading from the N-terminus, the 200-residue chain is 3-isopropylmalate dehydratase small subunit (200 aa).

This sequence belongs to the LeuD family. LeuD type 1 subfamily. Heterodimer of LeuC and LeuD.

The catalysed reaction is (2R,3S)-3-isopropylmalate = (2S)-2-isopropylmalate. The protein operates within amino-acid biosynthesis; L-leucine biosynthesis; L-leucine from 3-methyl-2-oxobutanoate: step 2/4. In terms of biological role, catalyzes the isomerization between 2-isopropylmalate and 3-isopropylmalate, via the formation of 2-isopropylmaleate. In Photobacterium profundum (strain SS9), this protein is 3-isopropylmalate dehydratase small subunit.